The chain runs to 108 residues: Curli assembly protein CsgC (108 aa).

A signal peptide spans 1 to 8; that stretch reads MHTLLLLA.

Belongs to the CsgC/AgfC family.

It localises to the periplasm. In terms of biological role, plays a role in the extracellular assembly of CsgA into thin aggregative fimbriae (Tafi) fibers. Assembly may also require CsgE. Tafi are thought to be assembled via an extracellular nucleation-precipitation (ENP) pathway, and possibly also via an intracellular non-CsgC-dependent pathway. This chain is Curli assembly protein CsgC, found in Salmonella arizonae (strain ATCC BAA-731 / CDC346-86 / RSK2980).